A 218-amino-acid chain; its full sequence is N-(5'-phosphoribosyl)anthranilate isomerase (218 aa).

Belongs to the TrpF family.

It catalyses the reaction N-(5-phospho-beta-D-ribosyl)anthranilate = 1-(2-carboxyphenylamino)-1-deoxy-D-ribulose 5-phosphate. It functions in the pathway amino-acid biosynthesis; L-tryptophan biosynthesis; L-tryptophan from chorismate: step 3/5. The chain is N-(5'-phosphoribosyl)anthranilate isomerase from Alcanivorax borkumensis (strain ATCC 700651 / DSM 11573 / NCIMB 13689 / SK2).